A 425-amino-acid chain; its full sequence is Exodeoxyribonuclease 7 large subunit (425 aa).

This sequence belongs to the XseA family. As to quaternary structure, heterooligomer composed of large and small subunits.

It is found in the cytoplasm. It carries out the reaction Exonucleolytic cleavage in either 5'- to 3'- or 3'- to 5'-direction to yield nucleoside 5'-phosphates.. Functionally, bidirectionally degrades single-stranded DNA into large acid-insoluble oligonucleotides, which are then degraded further into small acid-soluble oligonucleotides. The protein is Exodeoxyribonuclease 7 large subunit of Nocardia farcinica (strain IFM 10152).